Reading from the N-terminus, the 432-residue chain is Enolase (432 aa).

A (2R)-2-phosphoglycerate-binding site is contributed by glutamine 167. The active-site Proton donor is the glutamate 209. Positions 246, 290, and 317 each coordinate Mg(2+). Positions 342, 371, 372, and 393 each coordinate (2R)-2-phosphoglycerate. Residue lysine 342 is the Proton acceptor of the active site.

This sequence belongs to the enolase family. As to quaternary structure, component of the RNA degradosome, a multiprotein complex involved in RNA processing and mRNA degradation. It depends on Mg(2+) as a cofactor.

The protein localises to the cytoplasm. The protein resides in the secreted. It is found in the cell surface. The enzyme catalyses (2R)-2-phosphoglycerate = phosphoenolpyruvate + H2O. Its pathway is carbohydrate degradation; glycolysis; pyruvate from D-glyceraldehyde 3-phosphate: step 4/5. Functionally, catalyzes the reversible conversion of 2-phosphoglycerate (2-PG) into phosphoenolpyruvate (PEP). It is essential for the degradation of carbohydrates via glycolysis. The chain is Enolase from Salmonella dublin (strain CT_02021853).